The following is a 51-amino-acid chain: Small ribosomal subunit protein uS14 (51 aa).

Zn(2+) contacts are provided by cysteine 16, cysteine 19, cysteine 34, and cysteine 37.

It belongs to the universal ribosomal protein uS14 family. Zinc-binding uS14 subfamily. In terms of assembly, part of the 30S ribosomal subunit. Zn(2+) is required as a cofactor.

Binds 16S rRNA, required for the assembly of 30S particles. In Archaeoglobus fulgidus (strain ATCC 49558 / DSM 4304 / JCM 9628 / NBRC 100126 / VC-16), this protein is Small ribosomal subunit protein uS14.